A 330-amino-acid polypeptide reads, in one-letter code: Short chain dehydrogenase yanD (330 aa).

Positions 57, 86, 113, 204, and 208 each coordinate NADP(+). Residue Y204 is the Proton donor of the active site. K208 functions as the Lowers pKa of active site Tyr in the catalytic mechanism.

It belongs to the short-chain dehydrogenases/reductases (SDR) family.

The protein operates within secondary metabolite biosynthesis; terpenoid biosynthesis. Short chain dehydrogenase; part of the gene cluster that mediates the biosynthesis of yanuthone D, a fungal isoprenoid epoxycyclohexenone that acts as an antibiotic against fungi and bacteria. The first step of the pathway is the synthesis of 6-methylsalicylic acid (6-MSA) by the polyketide synthase yanA. 6-MSA is then converted to m-cresol by the decarboxylase yanB. The cytochrome P450 monooxygenase yanC then catalyzes the oxidation of m-cresol to toluquinol. Epoxidation of toluquinol is then performed by the short chain dehydrogenase yanD, with the help of yanE, and a further prenylation by yanG leads to 7-deacetoxyyanuthone A. The next step is the hydroxylation of C-22 of 7-deacetoxyyanuthone A by the cytochrome P450 monooxygenase yanH to yield 22-deacetylyanuthone A. O-Mevalon transferase yanI then attaches mevalon to the hydroxyl group of 22-deacetylyanuthone A to produce yanuthone E. Finally, the FAD-dependent monooxygenase yanF oxidizes the hydroxyl group at C15 of yanuthone E to form yanuthone D. Furthermore, several branching points in the pathway lead to the production of yanuthones F and G from 7-deacetoxyyanuthone A; yanuthones H and I from 22-deacetylyanuthone A; and yanuthone J from yanuthone E. YanD is also involved in the synthesis of yanuthone X1 which does not have 6-methylsalicylic acid (6-MSA) as precursor. The protein is Short chain dehydrogenase yanD of Aspergillus niger (strain ATCC 1015 / CBS 113.46 / FGSC A1144 / LSHB Ac4 / NCTC 3858a / NRRL 328 / USDA 3528.7).